The following is a 783-amino-acid chain: Lon protease (783 aa).

The Lon N-terminal domain occupies 16-210; the sequence is LPLLASRGVV…KLLEIIKDEI (195 aa). 361-368 is a binding site for ATP; that stretch reads GAPGVGKT. A Lon proteolytic domain is found at 597–778; it reads KDRVGVATGM…DQVLDLILGG (182 aa). Active-site residues include Ser684 and Lys727.

This sequence belongs to the peptidase S16 family. Homohexamer. Organized in a ring with a central cavity.

It localises to the cytoplasm. It catalyses the reaction Hydrolysis of proteins in presence of ATP.. Its function is as follows. ATP-dependent serine protease that mediates the selective degradation of mutant and abnormal proteins as well as certain short-lived regulatory proteins. Required for cellular homeostasis and for survival from DNA damage and developmental changes induced by stress. Degrades polypeptides processively to yield small peptide fragments that are 5 to 10 amino acids long. Binds to DNA in a double-stranded, site-specific manner. This chain is Lon protease, found in Halothermothrix orenii (strain H 168 / OCM 544 / DSM 9562).